A 290-amino-acid chain; its full sequence is Arylamine N-acetyltransferase 2 (290 aa).

Cysteine 68 functions as the Acyl-thioester intermediate in the catalytic mechanism. Positions 103 and 104 each coordinate CoA. 106 to 107 (VH) contacts substrate. Catalysis depends on residues histidine 107 and aspartate 122. Positions 208, 214, and 287 each coordinate CoA.

Belongs to the arylamine N-acetyltransferase family.

Its subcellular location is the cytoplasm. It catalyses the reaction an arylamine + acetyl-CoA = an N-acetylarylamine + CoA. The enzyme catalyses an N-hydroxyarylamine + acetyl-CoA = an N-acetoxyarylamine + CoA. Catalyzes the N- or O-acetylation of various arylamine and heterocyclic amine substrates. Participates in the detoxification of a plethora of hydrazine and arylamine drugs, and is able to bioactivate several known carcinogens. The sequence is that of Arylamine N-acetyltransferase 2 (NAT2) from Homo sapiens (Human).